The chain runs to 1438 residues: MAMTEQQKFKVLADQIKISNQLDAEILNSGELTRIDVSNKNRTWEFHITLPQFLAHEDYLLFINAIEQEFKDIANVTCRFTVTNGTNQDEHAIKYFGHCIDQTALSPKVKGQLKQKKLIMSGKVLKVMVSNDIERNHFDKACNGSLIKAFRNCGFDIDKIIFETNDNDQEQNLASLEAHIQEEDEQSARLATEKLEKMKAEKAKQQDNNESAVDKCQIGKPIQIENIKPIESIIEEEFKVAIEGVIFDINLKELKSGRHIVEIKVTDYTDSLVLKMFTRKNKDDLEHFKALSVGKWVRAQGRIEEDTFIRDLVMMMSDIEEIKKATKKDKAEEKRVEFHLHTAMSQMDGIPNIGAYVKQAADWGHPAIAVTDHNVVQAFPDAHAAAEKHGIKMIYGMEGMLVDDGVPIAYKPQDVVLKDATYVVFDVETTGLSNQYDKIIELAAVKVHNGEIIDKFERFSNPHERLSETIINLTHITDDMLVDAPEIEEVLTEFKEWVGDAIFVAHNASFDMGFIDTGYERLGFGPSTNGVIDTLELSRTINTEYGKHGLNFLAKKYGVELTQHHRAIYDTEATAYIFIKMVQQMKELGVLNHNEINKKLSNEDAYKRARPSHVTLIVQNQQGLKNLFKIVSASLVKYFYRTPRIPRSLLDEYREGLLVGTACDEGELFTAVMQKDQSQVEKIAKYYDFIEIQPPALYQDLIDRELIRDTETLHEIYQRLIHAGDTAGIPVIATGNAHYLFEHDGIARKILIASQPGNPLNRSTLPEAHFRTTDEMLNEFHFLGEEKAHEIVVKNTNELADRIERVVPIKDELYTPRMEGANEEIRELSYANARKLYGEDLPQIVIDRLEKELKSIIGNGFAVIYLISQRLVKKSLDDGYLVGSRGSVGSSFVATMTEITEVNPLPPHYICPNCKTSEFFNDGSVGSGFDLPDKTCETCGAPLIKEGQDIPFETFLGFKGDKVPDIDLNFSGEYQPNAHNYTKVLFGEDKVFRAGTIGTVAEKTAFGYVKGYLNDQGIHKRGAEIDRLVKGCTGVKRTTGQHPGGIIVVPDYMDIYDFTPIQYPADDQNSAWMTTHFDFHSIHDNVLKLDILGHDDPTMIRMLQDLSGIDPKTIPVDDKEVMQIFSTPESLGVTEDEILCKTGTFGVPEFGTGFVRQMLEDTKPTTFSELVQISGLSHGTDVWLGNAQELIKTGICDLSSVIGCRDDIMVYLMYAGLEPSMAFKIMESVRKGKGLTEEMIETMKENEVPDWYLDSCLKIKYMFPKAHAAAYVLMAVRIAYFKVHHPLYYYASYFTIRASDFDLITMIKDKTSIRNTVKDMYSRYMDLGKKEKDVLTVLEIMNEMAHRGYRMQPISLEKSQAFEFIIEGDTLIPPFISVPGLGENVAKRIVEARDDGPFLSKEDLNKKAGLSQKIIEYLDELGSLPNLPDKAQLSIFDM.

An Exonuclease domain is found at 422-578 (YVVFDVETTG…YDTEATAYIF (157 aa)).

The protein belongs to the DNA polymerase type-C family. PolC subfamily.

The protein localises to the cytoplasm. The catalysed reaction is DNA(n) + a 2'-deoxyribonucleoside 5'-triphosphate = DNA(n+1) + diphosphate. Its function is as follows. Required for replicative DNA synthesis. This DNA polymerase also exhibits 3' to 5' exonuclease activity. This is DNA polymerase III PolC-type from Staphylococcus aureus (strain MSSA476).